A 54-amino-acid chain; its full sequence is U-reduvitoxin-Pr1a (54 aa).

The first 19 residues, 1-19 (MKLLGLLLLVFTFMALAFA), serve as a signal peptide directing secretion. Intrachain disulfides connect Cys24–Cys39, Cys31–Cys44, and Cys38–Cys51.

It belongs to the venom Ptu1-like knottin family. As to expression, expressed by the venom gland (posterior main gland) (at protein level).

It is found in the secreted. Its function is as follows. Binds reversibly and blocks P/Q-type voltage-gated calcium channels (Cav). The protein is U-reduvitoxin-Pr1a of Platymeris rhadamanthus (Red spot assassin bug).